The primary structure comprises 205 residues: MTEFESAPAYQEAKYLTSAAEFDQLPPDQGAEIAFIGRSNAGKSSALNIITGIKGLARTSKTPGRTQMINFFALNEHERLVDLPGYGYAKVPRMVQKRWEELVDSYLKKRRCLKGLVVVMDIRHPLKEMDEDVIEWAVNYDIPIHILLTKSDKLSQNAAKKTLGEVQTAISAYGEKLTLQLFSSHDRTGLDEVKAVLSQWFRSEP.

One can recognise an EngB-type G domain in the interval 29–203 (QGAEIAFIGR…KAVLSQWFRS (175 aa)). GTP is bound by residues 37 to 44 (GRSNAGKS), 64 to 68 (GRTQM), 82 to 85 (DLPG), 149 to 152 (TKSD), and 182 to 184 (FSS). Mg(2+) is bound by residues serine 44 and threonine 66.

This sequence belongs to the TRAFAC class TrmE-Era-EngA-EngB-Septin-like GTPase superfamily. EngB GTPase family. Mg(2+) serves as cofactor.

Necessary for normal cell division and for the maintenance of normal septation. The polypeptide is Probable GTP-binding protein EngB (Coxiella burnetii (strain CbuG_Q212) (Coxiella burnetii (strain Q212))).